Reading from the N-terminus, the 381-residue chain is Probable tRNA sulfurtransferase (381 aa).

The region spanning 57–160 (EKGIEKLKSV…NKAYVYSKKI (104 aa)) is the THUMP domain. Residues 177 to 178 (ML), 202 to 203 (YF), R259, G281, and Q290 contribute to the ATP site.

It belongs to the ThiI family.

It is found in the cytoplasm. It catalyses the reaction [ThiI sulfur-carrier protein]-S-sulfanyl-L-cysteine + a uridine in tRNA + 2 reduced [2Fe-2S]-[ferredoxin] + ATP + H(+) = [ThiI sulfur-carrier protein]-L-cysteine + a 4-thiouridine in tRNA + 2 oxidized [2Fe-2S]-[ferredoxin] + AMP + diphosphate. The catalysed reaction is [ThiS sulfur-carrier protein]-C-terminal Gly-Gly-AMP + S-sulfanyl-L-cysteinyl-[cysteine desulfurase] + AH2 = [ThiS sulfur-carrier protein]-C-terminal-Gly-aminoethanethioate + L-cysteinyl-[cysteine desulfurase] + A + AMP + 2 H(+). It functions in the pathway cofactor biosynthesis; thiamine diphosphate biosynthesis. Its function is as follows. Catalyzes the ATP-dependent transfer of a sulfur to tRNA to produce 4-thiouridine in position 8 of tRNAs, which functions as a near-UV photosensor. Also catalyzes the transfer of sulfur to the sulfur carrier protein ThiS, forming ThiS-thiocarboxylate. This is a step in the synthesis of thiazole, in the thiamine biosynthesis pathway. The sulfur is donated as persulfide by IscS. This Clostridium kluyveri (strain NBRC 12016) protein is Probable tRNA sulfurtransferase.